Reading from the N-terminus, the 427-residue chain is Queuine tRNA-ribosyltransferase catalytic subunit (427 aa).

Asp-99 serves as the catalytic Proton acceptor. Residues Asp-99 to Phe-103, Asp-153, Gln-196, and Gly-223 contribute to the substrate site. The RNA binding stretch occupies residues Gly-254–Asp-260. Asp-273 serves as the catalytic Nucleophile. The segment at Thr-278–Arg-282 is RNA binding; important for wobble base 34 recognition. Zn(2+) contacts are provided by Cys-311, Cys-313, Cys-316, and His-341. The tract at residues Pro-395–Ser-427 is disordered. A compositionally biased stretch (basic and acidic residues) spans Asp-397–Glu-417.

It belongs to the queuine tRNA-ribosyltransferase family. In terms of assembly, heterodimer of a catalytic subunit and an accessory subunit. It depends on Zn(2+) as a cofactor.

It is found in the cytoplasm. It carries out the reaction guanosine(34) in tRNA + queuine = queuosine(34) in tRNA + guanine. Functionally, catalytic subunit of the queuine tRNA-ribosyltransferase (TGT) that catalyzes the base-exchange of a guanine (G) residue with queuine (Q) at position 34 (anticodon wobble position) in tRNAs with GU(N) anticodons (tRNA-Asp, -Asn, -His and -Tyr), resulting in the hypermodified nucleoside queuosine (7-(((4,5-cis-dihydroxy-2-cyclopenten-1-yl)amino)methyl)-7-deazaguanosine). Catalysis occurs through a double-displacement mechanism. The nucleophile active site attacks the C1' of nucleotide 34 to detach the guanine base from the RNA, forming a covalent enzyme-RNA intermediate. The proton acceptor active site deprotonates the incoming queuine, allowing a nucleophilic attack on the C1' of the ribose to form the product. This is Queuine tRNA-ribosyltransferase catalytic subunit (Tgt) from Drosophila melanogaster (Fruit fly).